Consider the following 430-residue polypeptide: Enolase (430 aa).

(2R)-2-phosphoglycerate is bound at residue Gln-163. Glu-205 serves as the catalytic Proton donor. Mg(2+)-binding residues include Asp-242, Glu-286, and Asp-313. (2R)-2-phosphoglycerate is bound by residues Lys-338, Arg-367, Ser-368, and Lys-389. Catalysis depends on Lys-338, which acts as the Proton acceptor.

It belongs to the enolase family. It depends on Mg(2+) as a cofactor.

Its subcellular location is the cytoplasm. The protein resides in the secreted. It localises to the cell surface. It catalyses the reaction (2R)-2-phosphoglycerate = phosphoenolpyruvate + H2O. The protein operates within carbohydrate degradation; glycolysis; pyruvate from D-glyceraldehyde 3-phosphate: step 4/5. Catalyzes the reversible conversion of 2-phosphoglycerate (2-PG) into phosphoenolpyruvate (PEP). It is essential for the degradation of carbohydrates via glycolysis. This chain is Enolase, found in Geotalea daltonii (strain DSM 22248 / JCM 15807 / FRC-32) (Geobacter daltonii).